The primary structure comprises 363 residues: Phosphoserine aminotransferase (363 aa).

L-glutamate is bound at residue Arg42. Pyridoxal 5'-phosphate-binding positions include 76 to 77 (AS), Trp101, Thr151, Asp170, and Gln193. Position 194 is an N6-(pyridoxal phosphate)lysine (Lys194). 234–235 (NT) is a pyridoxal 5'-phosphate binding site.

It belongs to the class-V pyridoxal-phosphate-dependent aminotransferase family. SerC subfamily. In terms of assembly, homodimer. Pyridoxal 5'-phosphate is required as a cofactor.

It localises to the cytoplasm. It carries out the reaction O-phospho-L-serine + 2-oxoglutarate = 3-phosphooxypyruvate + L-glutamate. The catalysed reaction is 4-(phosphooxy)-L-threonine + 2-oxoglutarate = (R)-3-hydroxy-2-oxo-4-phosphooxybutanoate + L-glutamate. It participates in amino-acid biosynthesis; L-serine biosynthesis; L-serine from 3-phospho-D-glycerate: step 2/3. Its function is as follows. Catalyzes the reversible conversion of 3-phosphohydroxypyruvate to phosphoserine and of 3-hydroxy-2-oxo-4-phosphonooxybutanoate to phosphohydroxythreonine. This is Phosphoserine aminotransferase from Listeria monocytogenes serotype 4b (strain F2365).